A 553-amino-acid chain; its full sequence is Copine-9 (553 aa).

2 C2 domains span residues M1–L125 and K132–Y255. N95 carries an N-linked (GlcNAc...) asparagine glycan. Positions 163, 169, 225, 227, and 233 each coordinate Ca(2+). Positions N299–V500 constitute a VWFA domain. The disordered stretch occupies residues T531–P553. A compositionally biased stretch (pro residues) spans P536–P553.

This sequence belongs to the copine family. The cofactor is Ca(2+). Expressed in melanocytes.

Probable calcium-dependent phospholipid-binding protein that may play a role in calcium-mediated intracellular processes. Plays a role in dendrite formation by melanocytes. The protein is Copine-9 of Homo sapiens (Human).